The following is a 459-amino-acid chain: UDP-N-acetylmuramate--L-alanine ligase (459 aa).

113–119 serves as a coordination point for ATP; the sequence is GSHGKTS.

The protein belongs to the MurCDEF family.

The protein localises to the cytoplasm. It catalyses the reaction UDP-N-acetyl-alpha-D-muramate + L-alanine + ATP = UDP-N-acetyl-alpha-D-muramoyl-L-alanine + ADP + phosphate + H(+). It functions in the pathway cell wall biogenesis; peptidoglycan biosynthesis. Its function is as follows. Cell wall formation. The chain is UDP-N-acetylmuramate--L-alanine ligase from Desulfotalea psychrophila (strain LSv54 / DSM 12343).